Consider the following 154-residue polypeptide: Ubiquitin-conjugating enzyme E2 L3 (154 aa).

The UBC core domain occupies 2–149 (AASRRLMKEL…AEEFTKKYGE (148 aa)). The Glycyl thioester intermediate role is filled by C86. K131 carries the post-translational modification N6-acetyllysine.

It belongs to the ubiquitin-conjugating enzyme family. In terms of assembly, interacts with PRKN; involved in ubiquitination and degradation of misfolded proteins. Interacts with UBE3A. Interacts with CCNB1IP1, CBL, ZAP70, RNF19A, RNF19B and RNF144B. Interacts with ARIH1. Interacts with ARIH2 (via RING-type 1). Interacts with NCOA1; they functionally interact to regulate progesterone receptor transcriptional activity. Interacts with NDFIP1 (via N-terminus); the interaction mediates recruitment of UBE2L3 to ITCH and causes MAP3K7 ubiquitination. In terms of processing, ubiquitinated. The alteration of UBE2L3 protein levels during the S-phase of the cell cycle is due to ubiquitin-dependent proteasomal degradation. Autoubiquitinated in vitro.

It is found in the nucleus. Its subcellular location is the cytoplasm. It carries out the reaction S-ubiquitinyl-[E1 ubiquitin-activating enzyme]-L-cysteine + [E2 ubiquitin-conjugating enzyme]-L-cysteine = [E1 ubiquitin-activating enzyme]-L-cysteine + S-ubiquitinyl-[E2 ubiquitin-conjugating enzyme]-L-cysteine.. It participates in protein modification; protein ubiquitination. Its function is as follows. Ubiquitin-conjugating enzyme E2 that specifically acts with HECT-type and RBR family E3 ubiquitin-protein ligases. Does not function with most RING-containing E3 ubiquitin-protein ligases because it lacks intrinsic E3-independent reactivity with lysine: in contrast, it has activity with the RBR family E3 enzymes, such as PRKN, RNF31 and ARIH1, that function like RING-HECT hybrids. Accepts ubiquitin from the E1 complex and catalyzes its covalent attachment to other proteins. Mediates ubiquitination by the CUL9-RBX1 complex. In vitro catalyzes 'Lys-11'-linked polyubiquitination. Involved in the selective degradation of short-lived and abnormal proteins. Down-regulated during the S-phase it is involved in progression through the cell cycle. Regulates nuclear hormone receptors transcriptional activity. May play a role in myelopoiesis. The chain is Ubiquitin-conjugating enzyme E2 L3 (UBE2L3) from Pongo abelii (Sumatran orangutan).